A 274-amino-acid chain; its full sequence is Glutamate--cysteine ligase regulatory subunit (274 aa).

Ser59 is subject to Phosphoserine. Lys263 bears the N6-acetyllysine mark.

Belongs to the aldo/keto reductase family. Glutamate--cysteine ligase light chain subfamily. Heterodimer of a catalytic heavy chain and a regulatory light chain.

Its pathway is sulfur metabolism; glutathione biosynthesis; glutathione from L-cysteine and L-glutamate: step 1/2. This is Glutamate--cysteine ligase regulatory subunit (Gclm) from Mus musculus (Mouse).